The following is a 303-amino-acid chain: UDP-3-O-acyl-N-acetylglucosamine deacetylase (303 aa).

Zn(2+) is bound by residues His-78, His-237, and Asp-241. Residue His-264 is the Proton donor of the active site.

Belongs to the LpxC family. Zn(2+) serves as cofactor.

The catalysed reaction is a UDP-3-O-[(3R)-3-hydroxyacyl]-N-acetyl-alpha-D-glucosamine + H2O = a UDP-3-O-[(3R)-3-hydroxyacyl]-alpha-D-glucosamine + acetate. Its pathway is glycolipid biosynthesis; lipid IV(A) biosynthesis; lipid IV(A) from (3R)-3-hydroxytetradecanoyl-[acyl-carrier-protein] and UDP-N-acetyl-alpha-D-glucosamine: step 2/6. Its function is as follows. Catalyzes the hydrolysis of UDP-3-O-myristoyl-N-acetylglucosamine to form UDP-3-O-myristoylglucosamine and acetate, the committed step in lipid A biosynthesis. The sequence is that of UDP-3-O-acyl-N-acetylglucosamine deacetylase from Pseudomonas putida (strain GB-1).